The sequence spans 336 residues: Ventral anterior homeobox 1 (336 aa).

The span at 1-34 (MFGKTDKMDVRCHSDTEAARVSKNAHKESREIKG) shows a compositional bias: basic and acidic residues. Disordered stretches follow at residues 1 to 39 (MFGKTDKMDVRCHSDTEAARVSKNAHKESREIKGAEGSL) and 50 to 69 (AFSASGASEDCNKSKSNSSA). Positions 100–159 (PKRTRTSFTAEQLYRLEMEFQRCQYVVGRERTELARQLNLSETQVKVWFQNRRTKQKKDQ) form a DNA-binding region, homeobox. The segment covering 236–250 (PGPAGAASQHPPAVG) has biased composition (low complexity). Disordered stretches follow at residues 236–267 (PGPAGAASQHPPAVGGAPGPGPAGPGGLHAGA) and 316–336 (SAFEPYSRTNNKEGAEKKALD). The span at 325 to 336 (NNKEGAEKKALD) shows a compositional bias: basic and acidic residues.

Belongs to the EMX homeobox family.

The protein localises to the nucleus. Its function is as follows. Transcription factor that may function in dorsoventral specification of the forebrain. Required for axon guidance and major tract formation in the developing forebrain. May contribute to the differentiation of the neuroretina, pigmented epithelium and optic stalk. This is Ventral anterior homeobox 1 (Vax1) from Rattus norvegicus (Rat).